Consider the following 207-residue polypeptide: dTTP/UTP pyrophosphatase (207 aa).

Asp-87 functions as the Proton acceptor in the catalytic mechanism.

The protein belongs to the Maf family. YhdE subfamily. The cofactor is a divalent metal cation.

It localises to the cytoplasm. It carries out the reaction dTTP + H2O = dTMP + diphosphate + H(+). The enzyme catalyses UTP + H2O = UMP + diphosphate + H(+). Nucleoside triphosphate pyrophosphatase that hydrolyzes dTTP and UTP. May have a dual role in cell division arrest and in preventing the incorporation of modified nucleotides into cellular nucleic acids. The chain is dTTP/UTP pyrophosphatase from Bordetella bronchiseptica (strain ATCC BAA-588 / NCTC 13252 / RB50) (Alcaligenes bronchisepticus).